A 299-amino-acid chain; its full sequence is Oxygen-dependent coproporphyrinogen-III oxidase (299 aa).

Position 92 (Ser92) interacts with substrate. The a divalent metal cation site is built by His96 and His106. His106 acts as the Proton donor in catalysis. 108 to 110 (NVR) is a substrate binding site. Residues His145 and His175 each coordinate a divalent metal cation. Positions 240 to 275 (YVEFNLVWDRGTLFGLQTGGRTESILMSMPPLVRWE) are important for dimerization. 258-260 (GGR) provides a ligand contact to substrate.

This sequence belongs to the aerobic coproporphyrinogen-III oxidase family. As to quaternary structure, homodimer. It depends on a divalent metal cation as a cofactor.

Its subcellular location is the cytoplasm. The catalysed reaction is coproporphyrinogen III + O2 + 2 H(+) = protoporphyrinogen IX + 2 CO2 + 2 H2O. It participates in porphyrin-containing compound metabolism; protoporphyrin-IX biosynthesis; protoporphyrinogen-IX from coproporphyrinogen-III (O2 route): step 1/1. Involved in the heme biosynthesis. Catalyzes the aerobic oxidative decarboxylation of propionate groups of rings A and B of coproporphyrinogen-III to yield the vinyl groups in protoporphyrinogen-IX. This is Oxygen-dependent coproporphyrinogen-III oxidase from Salmonella arizonae (strain ATCC BAA-731 / CDC346-86 / RSK2980).